The following is a 315-amino-acid chain: Methionyl-tRNA formyltransferase (315 aa).

An N-terminal domain region spans residues 2–189 (SESLRIIFAG…LITTLKQLAD (188 aa)). (6S)-5,6,7,8-tetrahydrofolate is bound at residue 113–116 (SLLP). The interval 210 to 315 (KEEARIDWSL…EWFVPGNRLV (106 aa)) is C-terminal domain.

Belongs to the Fmt family. In terms of assembly, monomer.

It catalyses the reaction L-methionyl-tRNA(fMet) + (6R)-10-formyltetrahydrofolate = N-formyl-L-methionyl-tRNA(fMet) + (6S)-5,6,7,8-tetrahydrofolate + H(+). Its activity is regulated as follows. Activity is optimum in the presence of Mg(2+) and K(+). Attaches a formyl group to the free amino group of methionyl-tRNA(fMet). The formyl group appears to play a dual role in the initiator identity of N-formylmethionyl-tRNA by promoting its recognition by IF2 and preventing the misappropriation of this tRNA by the elongation apparatus. The protein is Methionyl-tRNA formyltransferase of Escherichia coli (strain K12).